The primary structure comprises 283 residues: Bifunctional protein FolD (283 aa).

NADP(+) contacts are provided by residues 165-167 (GRG), T192, and V233.

Belongs to the tetrahydrofolate dehydrogenase/cyclohydrolase family. Homodimer.

The enzyme catalyses (6R)-5,10-methylene-5,6,7,8-tetrahydrofolate + NADP(+) = (6R)-5,10-methenyltetrahydrofolate + NADPH. It carries out the reaction (6R)-5,10-methenyltetrahydrofolate + H2O = (6R)-10-formyltetrahydrofolate + H(+). The protein operates within one-carbon metabolism; tetrahydrofolate interconversion. In terms of biological role, catalyzes the oxidation of 5,10-methylenetetrahydrofolate to 5,10-methenyltetrahydrofolate and then the hydrolysis of 5,10-methenyltetrahydrofolate to 10-formyltetrahydrofolate. The sequence is that of Bifunctional protein FolD from Mycolicibacterium smegmatis (strain ATCC 700084 / mc(2)155) (Mycobacterium smegmatis).